Consider the following 785-residue polypeptide: Endonuclease MutS2 (785 aa).

Residue glycine 335 to threonine 342 participates in ATP binding. The Smr domain occupies leucine 710–lysine 785.

It belongs to the DNA mismatch repair MutS family. MutS2 subfamily. In terms of assembly, homodimer. Binds to stalled ribosomes, contacting rRNA.

In terms of biological role, endonuclease that is involved in the suppression of homologous recombination and thus may have a key role in the control of bacterial genetic diversity. Its function is as follows. Acts as a ribosome collision sensor, splitting the ribosome into its 2 subunits. Detects stalled/collided 70S ribosomes which it binds and splits by an ATP-hydrolysis driven conformational change. Acts upstream of the ribosome quality control system (RQC), a ribosome-associated complex that mediates the extraction of incompletely synthesized nascent chains from stalled ribosomes and their subsequent degradation. Probably generates substrates for RQC. The polypeptide is Endonuclease MutS2 (Listeria monocytogenes serotype 4a (strain HCC23)).